The following is a 965-amino-acid chain: Collagen alpha-1(I) chain (965 aa).

Residues 1–965 are disordered; sequence GGISVPGPMG…PGPPGPPGPP (965 aa). 11 positions are modified to 4-hydroxyproline: P18, P21, P23, P32, P35, P38, P53, P68, P74, P83, and P89. Residues 26-44 show a composition bias toward low complexity; it reads QGFQGPPGEPGEPGSSGPM. Residues 56–70 show a composition bias toward basic and acidic residues; that stretch reads NGDDGEAGKPGRPGE. K92 is modified (5-hydroxylysine; alternate). K92 carries O-linked (Gal...) hydroxylysine; alternate glycosylation. S98 carries the post-translational modification Phosphoserine. Residues 106 to 122 show a composition bias toward low complexity; the sequence is DAGPAGPKGEPGSPGEN. 15 positions are modified to 4-hydroxyproline: P116, P119, P125, P139, P160, P169, P172, P199, P202, P214, P220, P229, P235, P238, and P253. Residues 139-157 are compositionally biased toward low complexity; that stretch reads PGASGPAGARGNDGATGAA. Residues 159–171 show a composition bias toward pro residues; that stretch reads PPGPTGPAGPPGF. The segment covering 205-244 has biased composition (low complexity); the sequence is AGAAGPAGNPGADGQPGAKGANGAPGIAGAPGFPGARGPS. Position 256 is a 5-hydroxylysine (K256). 4-hydroxyproline is present on residues P262, P265, P269, P278, P293, P299, P308, and P314. The segment covering 303–312 has biased composition (gly residues); the sequence is GERGGPGSRG. A 5-hydroxylysine modification is found at K323. P326, P332, P338, P347, P350, P359, P368, P374, P386, P395, P404, P407, P425, P442, P448, P454, P460, P466, P472, P484, P493, P506, P512, and P521 each carry 4-hydroxyproline. Residues 341–367 are compositionally biased toward low complexity; sequence KGLTGSPGSPGPDGKTGPPGPAGQDGR. Over residues 376–395 the composition is skewed to low complexity; it reads ARGQAGVMGFPGPKGAAGEP. Residues 454–463 are compositionally biased toward low complexity; it reads PGEAGKPGEQ. K533 carries the post-translational modification 5-hydroxylysine. P539, P554, and P560 each carry 4-hydroxyproline. A compositionally biased stretch (low complexity) spans 566–580; that stretch reads SGPSGPAGPTGARGA. S569 is modified (phosphoserine). P581, P587, P590, P599, P605, P623, P632, and P641 each carry 4-hydroxyproline. Positions 593-620 are enriched in low complexity; the sequence is AGFAGPPGADGQPGAKGEPGDAGAKGDA. The residue at position 644 (K644) is a 5-hydroxylysine. Over residues 649–665 the composition is skewed to low complexity; the sequence is SAGPPGATGFPGAAGRV. P653 and P659 each carry 4-hydroxyproline. 3-hydroxyproline is present on P667. 4-hydroxyproline occurs at positions 668, 677, 680, 716, 725, 743, 752, 755, 761, 776, 782, 788, 796, and 802. The segment covering 710-725 has biased composition (low complexity); the sequence is SGEKGSPGADGPAGAP. Positions 775–785 are enriched in pro residues; the sequence is PPGPMGPPGLA. K811 is modified (5-hydroxylysine). 4-hydroxyproline is present on residues P819, P822, and P825. The span at 819–831 shows a compositional bias: pro residues; that stretch reads PGAPGAPGAPGPV. Residues 851–865 are compositionally biased toward low complexity; that stretch reads AGPAGARGPAGPQGP. Basic and acidic residues predominate over residues 866-880; the sequence is RGDKGETGEQGDRGI. K869 is subject to 5-hydroxylysine. 5-hydroxylysine; alternate is present on K881. K881 carries O-linked (Gal...) hydroxylysine; alternate glycosylation. P896, P899, P917, and P932 each carry 4-hydroxyproline. Positions 899–932 are enriched in low complexity; sequence PGEQGPSGASGPAGPRGPPGSAGSPGKDGLNGLP. P937 carries the post-translational modification 3-hydroxyproline. A 4-hydroxyproline modification is found at P938. The span at 950-965 shows a compositional bias: pro residues; it reads VGPPGPPGPPGPPGPP. P952 is subject to 3-hydroxyproline. Residue P953 is modified to 4-hydroxyproline. P955 carries the post-translational modification 3-hydroxyproline. At P956 the chain carries 4-hydroxyproline. P958 bears the 3-hydroxyproline mark. 3 positions are modified to 4-hydroxyproline: P959, P962, and P965.

This sequence belongs to the fibrillar collagen family. Trimers of one alpha 2(I) and two alpha 1(I) chains. Post-translationally, contains mostly 4-hydroxyproline. Proline residues at the third position of the tripeptide repeating unit (G-X-Y) are hydroxylated in some or all of the chains. In terms of processing, contains 3-hydroxyproline at a few sites. This modification occurs on the first proline residue in the sequence motif Gly-Pro-Hyp, where Hyp is 4-hydroxyproline. Lysine residues at the third position of the tripeptide repeating unit (G-X-Y) are 5-hydroxylated in some or all of the chains. Post-translationally, O-glycosylated on hydroxylated lysine residues. The O-linked glycan consists of a Glc-Gal disaccharide. Expressed in bones.

The protein localises to the secreted. It is found in the extracellular space. It localises to the extracellular matrix. Functionally, type I collagen is a member of group I collagen (fibrillar forming collagen). The protein is Collagen alpha-1(I) chain of Acratocnus sp. (strain SLP-2019) (Ground sloth).